We begin with the raw amino-acid sequence, 217 residues long: uncharacterized protein (217 aa).

A helical membrane pass occupies residues 26–48 (VFMRGYVVGLVLALMLVTAPAMA).

Its subcellular location is the membrane. This is an uncharacterized protein from Archaeoglobus fulgidus (strain ATCC 49558 / DSM 4304 / JCM 9628 / NBRC 100126 / VC-16).